The primary structure comprises 471 residues: Argininosuccinate lyase (471 aa).

It belongs to the lyase 1 family. Argininosuccinate lyase subfamily.

The protein resides in the cytoplasm. It carries out the reaction 2-(N(omega)-L-arginino)succinate = fumarate + L-arginine. Its pathway is amino-acid biosynthesis; L-arginine biosynthesis; L-arginine from L-ornithine and carbamoyl phosphate: step 3/3. The chain is Argininosuccinate lyase from Acidiphilium cryptum (strain JF-5).